We begin with the raw amino-acid sequence, 259 residues long: Probable 6-phosphogluconolactonase 2 (259 aa).

The protein belongs to the glucosamine/galactosamine-6-phosphate isomerase family. 6-phosphogluconolactonase subfamily.

It is found in the cytoplasm. It localises to the cytosol. The enzyme catalyses 6-phospho-D-glucono-1,5-lactone + H2O = 6-phospho-D-gluconate + H(+). The protein operates within carbohydrate degradation; pentose phosphate pathway; D-ribulose 5-phosphate from D-glucose 6-phosphate (oxidative stage): step 2/3. Catalyzes the hydrolysis of 6-phosphogluconolactone to 6-phosphogluconate. This Arabidopsis thaliana (Mouse-ear cress) protein is Probable 6-phosphogluconolactonase 2.